Here is a 193-residue protein sequence, read N- to C-terminus: Probable GTP-binding protein EngB (193 aa).

One can recognise an EngB-type G domain in the interval 22 to 193; sequence ALPEFALAGR…EAWAALERFL (172 aa). Residues 30-37, 57-61, 75-78, 142-145, and 174-176 each bind GTP; these read GRSNVGKS, GKTQT, DVPG, TKAD, and FSA. Mg(2+) contacts are provided by Ser37 and Thr59.

This sequence belongs to the TRAFAC class TrmE-Era-EngA-EngB-Septin-like GTPase superfamily. EngB GTPase family. The cofactor is Mg(2+).

In terms of biological role, necessary for normal cell division and for the maintenance of normal septation. This Geobacillus sp. (strain WCH70) protein is Probable GTP-binding protein EngB.